The sequence spans 417 residues: Probable secreted aspartic protease ARB_07536 (417 aa).

Residues 1–20 (MRGILILVALGAATIPQASA) form the signal peptide. Residues 42–413 (NTDLVTIGTP…DFEKNRVGLA (372 aa)) form the Peptidase A1 domain. N-linked (GlcNAc...) asparagine glycosylation is found at Asn74, Asn91, Asn100, Asn170, Asn276, and Asn314. Cys333 and Cys373 are disulfide-bonded.

This sequence belongs to the peptidase A1 family.

It is found in the secreted. Its function is as follows. Probable secreted aspartic protease that supplies the fungus with nutrient amino acids. May be able to degrade the selected host's proteins involved in the immune defense. The polypeptide is Probable secreted aspartic protease ARB_07536 (Arthroderma benhamiae (strain ATCC MYA-4681 / CBS 112371) (Trichophyton mentagrophytes)).